The primary structure comprises 977 residues: GAS2-like protein pickled eggs (977 aa).

Residues 20 to 159 (EAMREDLAEW…CLLEVARRGA (140 aa)) form the Calponin-homology (CH) domain. Residues 218–245 (VETDLYDDSDDSETEDDGDQNPVLMYGP) form a disordered region. Over residues 221–236 (DLYDDSDDSETEDDGD) the composition is skewed to acidic residues. One can recognise a GAR domain in the interval 252 to 324 (NDLKSLDEMV…HYLDKHDPCR (73 aa)). 5 disordered regions span residues 397-543 (PTLQ…SEIS), 557-624 (AQKR…VCDG), 666-685 (VANTMGNPTPNLSKIPRSPL), 693-803 (IDNS…KGRS), and 910-977 (NLER…TELY). Polar residues-rich tracts occupy residues 399–428 (LQNGHSLSPNSGKYRSRSPTPQRKFLNQQA) and 436–454 (ATGSSQTVTTDTSSGQLLG). Residues 502 to 527 (GGSGVGSAAGGVSSGSAGSGVAGEQG) show a composition bias toward gly residues. The segment covering 577–589 (RLDQTSSDSQISP) has biased composition (polar residues). Positions 601–620 (ILEEEDLNGQDREEDQEDYS) are enriched in acidic residues. 2 stretches are compositionally biased toward polar residues: residues 666-677 (VANTMGNPTPNL) and 731-741 (TRNSTGATTTP). Positions 928–953 (SSAASSCESNNSNAGAGSGAAAGSAS) are enriched in low complexity.

Belongs to the GAS2 family. Expressed in the ovary and the ring canals of the germline cells. In larvae, expressed in the notal region of the wing disk.

It is found in the cytoplasm. It localises to the cytoskeleton. The protein localises to the cell cortex. Its function is as follows. Essential for development and viability. Required for ovary development and oogenesis, and is essential for the development of the indirect flight muscles. May act as a negative regulator of the Notch signaling pathway in certain tissues, such as the muscle precursors and ovaries. May function as a linker protein between the actin and microtubule cytoskeletons. This chain is GAS2-like protein pickled eggs, found in Drosophila melanogaster (Fruit fly).